A 267-amino-acid polypeptide reads, in one-letter code: Matrilysin (267 aa).

The signal sequence occupies residues 1-17; it reads MRLTVLCAVCLLPGSLA. Residues 18–94 constitute a propeptide, activation peptide; it reads LPLPQEAGGM…PRCGVPDVAE (77 aa). The Cysteine switch signature appears at 85-92; sequence PRCGVPDV. Residue Cys-87 coordinates Zn(2+). Ca(2+) is bound at residue Asp-153. Zn(2+) contacts are provided by His-163 and Asp-165. 4 residues coordinate Ca(2+): Asp-170, Gly-171, Gly-173, and Thr-175. His-178 contacts Zn(2+). Ca(2+)-binding residues include Gly-185, Gly-187, and Asp-189. His-191 contacts Zn(2+). Residues Asp-193 and Glu-196 each contribute to the Ca(2+) site. Residue His-214 coordinates Zn(2+). Glu-215 is a catalytic residue. Zn(2+)-binding residues include His-218 and His-224.

The protein belongs to the peptidase M10A family. It depends on Ca(2+) as a cofactor. The cofactor is Zn(2+).

The protein resides in the secreted. Its subcellular location is the extracellular space. It is found in the extracellular matrix. The catalysed reaction is Cleavage of 14-Ala-|-Leu-15 and 16-Tyr-|-Leu-17 in B chain of insulin. No action on collagen types I, II, IV, V. Cleaves gelatin chain alpha2(I) &gt; alpha1(I).. In terms of biological role, degrades casein, gelatins of types I, III, IV, and V, and fibronectin. Activates procollagenase. The chain is Matrilysin (MMP7) from Homo sapiens (Human).